A 476-amino-acid chain; its full sequence is Protein transport protein Sec61 subunit alpha isoform B (476 aa).

The Cytoplasmic portion of the chain corresponds to 2 to 33 (GIKFLEVIKPFCAVLPEIQKPERKIQFREKVL). Residues 34–53 (WTAITLFIFLVCCQIPLFGI) form a helical membrane-spanning segment. Residues 54–76 (MSSDSADPFYWMRVILASNRGTL) lie on the Lumenal side of the membrane. A helical transmembrane segment spans residues 77 to 96 (MELGISPIVTSGLIMQLLAG). The Cytoplasmic segment spans residues 97 to 117 (AKIIEVGDTPKDRALFNGAQK). The helical transmembrane segment at 118-138 (LFGMIITIGQAIVYVMTGMYG) threads the bilayer. At 139–144 (DPSDMG) the chain is on the lumenal side. A helical membrane pass occupies residues 145-165 (AGICLLIIIQLFVAGLIVLLL). Residues 166-172 (DELLQKG) lie on the Cytoplasmic side of the membrane. Residues 173-193 (YGLGSGISLFIATNICETIVW) traverse the membrane as a helical segment. Residues 194–240 (KAFSPTTVNTGRGTEFEGAIIALFHLLATRTDKVRALREAFYRQNLP) lie on the Lumenal side of the membrane. A helical membrane pass occupies residues 241–261 (NLMNLLATVFVFGVVIYFQGF). Over 262–288 (RVDLPIKSARYRGQYNTYPIKLFYTSN) the chain is Cytoplasmic. The chain crosses the membrane as a helical span at residues 289 to 309 (IPIILQSALVSNLYVISQMLS). At 310–354 (TRFSGNFLVNLLGTWSDTSSGGPARAYPVGGLCYYFSPPESFGSV) the chain is on the lumenal side. A helical transmembrane segment spans residues 355–375 (LDDPIHAAIYICFMLGSCAFF). At 376 to 420 (SKTWIEVSGSSAKDVAKQLKEQQMVMRGHRETSMVHELNRYIPTA) the chain is on the cytoplasmic side. Residues 421–441 (AAFGGLCIGGLSVMADFLGAI) form a helical membrane-spanning segment. At 442 to 445 (GSGT) the chain is on the lumenal side. Residues 446 to 462 (GILLAVTIIYQYFEIFV) traverse the membrane as a helical segment. The Cytoplasmic portion of the chain corresponds to 463 to 476 (KEQSEMGSMGALLF).

The protein belongs to the SecY/SEC61-alpha family. As to quaternary structure, the SEC61 channel-forming translocon complex consists of channel-forming core components SEC61A1, SEC61B and SEC61G and different auxiliary components such as SEC62 and SEC63.

The protein resides in the endoplasmic reticulum membrane. Component of SEC61 channel-forming translocon complex that mediates transport of signal peptide-containing precursor polypeptides across the endoplasmic reticulum (ER). Forms a ribosome receptor and a gated pore in the ER membrane, both functions required for cotranslational translocation of nascent polypeptides. The protein is Protein transport protein Sec61 subunit alpha isoform B (sec61ab) of Oncorhynchus mykiss (Rainbow trout).